Consider the following 38-residue polypeptide: Photosystem II reaction center protein L (38 aa).

A helical transmembrane segment spans residues 17 to 37 (SLYWGLLLIFVLAILFSSYIF).

This sequence belongs to the PsbL family. As to quaternary structure, PSII is composed of 1 copy each of membrane proteins PsbA, PsbB, PsbC, PsbD, PsbE, PsbF, PsbH, PsbI, PsbJ, PsbK, PsbL, PsbM, PsbT, PsbX, PsbY, PsbZ, Psb30/Ycf12, at least 3 peripheral proteins of the oxygen-evolving complex and a large number of cofactors. It forms dimeric complexes.

The protein resides in the plastid. It localises to the chloroplast thylakoid membrane. One of the components of the core complex of photosystem II (PSII). PSII is a light-driven water:plastoquinone oxidoreductase that uses light energy to abstract electrons from H(2)O, generating O(2) and a proton gradient subsequently used for ATP formation. It consists of a core antenna complex that captures photons, and an electron transfer chain that converts photonic excitation into a charge separation. This subunit is found at the monomer-monomer interface and is required for correct PSII assembly and/or dimerization. This Nephroselmis olivacea (Green alga) protein is Photosystem II reaction center protein L.